A 278-amino-acid polypeptide reads, in one-letter code: Nucleotide-binding protein LHK_02029 (278 aa).

8–15 (GLAGSGKS) lines the ATP pocket. GTP is bound at residue 57 to 60 (DTRD).

The protein belongs to the RapZ-like family.

Displays ATPase and GTPase activities. In Laribacter hongkongensis (strain HLHK9), this protein is Nucleotide-binding protein LHK_02029.